Consider the following 198-residue polypeptide: Large ribosomal subunit protein bL12m (198 aa).

The N-terminal 36 residues, 1–36, are a transit peptide targeting the mitochondrion; that stretch reads MLPSATSLLRGPCLGLRAAALRLVRQQVPHVCAVRL. Residues 106-115 show a composition bias toward low complexity; it reads GAAPAPTAPE. The disordered stretch occupies residues 106-126; sequence GAAPAPTAPEAAEEDVPKQKE. 4 positions are modified to N6-acetyllysine: lysine 125, lysine 138, lysine 142, and lysine 144. Lysine 150 bears the N6-acetyllysine; alternate mark. Lysine 150 bears the N6-succinyllysine; alternate mark. Residue lysine 150 forms a Glycyl lysine isopeptide (Lys-Gly) (interchain with G-Cter in ubiquitin) linkage. Lysine 162 is subject to N6-succinyllysine. An N6-acetyllysine mark is found at lysine 163 and lysine 173. Residue lysine 178 is modified to N6-acetyllysine; alternate. At lysine 178 the chain carries N6-succinyllysine; alternate. Lysine 185 carries the post-translational modification N6-acetyllysine.

This sequence belongs to the bacterial ribosomal protein bL12 family. As to quaternary structure, component of the mitochondrial ribosome large subunit (39S) which comprises a 16S rRNA and about 50 distinct proteins. Interacts with NOA1. Two mature forms are produced by differential two-step proteolytic cleavage. Cleaved by the mitochondrial processing protease to produce the long mature form and subsequently by the mitochondrial intermediate protease to produce the short mature form. Post-translationally, in the presence of CUL3, undergoes 'Lys-63'-linked ubiquitination at Lys-150 which results in proteasomal degradation.

The protein resides in the mitochondrion matrix. Its function is as follows. As a component of the mitochondrial large ribosomal subunit, plays a role in mitochondrial translation. When present in mitochondria as a free protein not associated with the ribosome, associates with mitochondrial RNA polymerase POLRMT to activate transcription. Required for POLRMT stability. This chain is Large ribosomal subunit protein bL12m (MRPL12), found in Bos taurus (Bovine).